Reading from the N-terminus, the 130-residue chain is MSATQYYGTGRRKTSTARVFAKAGSGNIVVNQRPLDVYFGRETARMVVRQPLELVEMTDKLDIYVTVKGGGTTGQAGAIRHGITRALLQLDEALRPTLRSAGFVTRDARKVERKKVGLRKARRKPQFSKR.

Belongs to the universal ribosomal protein uS9 family.

The sequence is that of Small ribosomal subunit protein uS9 from Shewanella denitrificans (strain OS217 / ATCC BAA-1090 / DSM 15013).